A 622-amino-acid polypeptide reads, in one-letter code: Low affinity potassium transport system protein Kup (622 aa).

The next 12 helical transmembrane spans lie at 9–29, 46–66, 101–121, 137–157, 165–185, 213–233, 247–267, 276–296, 337–357, 363–383, 395–415, and 416–436; these read LSAVTLAAIGVVYGDIGTSPL, PDVVFGFLSLIFWMLILVVSV, ILVVLGLIGGSFFYGEVVITP, PALDPYIVPCSIAVLTLLFVI, VGKLFAPVMLVWFLTLALLGL, VSFFALGAVVLAITGVEALYA, WFTVVLPSLVLNYFGQGALLL, PFFLLAPDWALIPLLILATLA, IYIPVINWTLYLAVVLVIIGF, LAAAYGIAVTGTMVITSILFC, FLVVFLLMVLLIIDIPMFSAN, and VLKLFSGGWLPLSLGLVMFII.

This sequence belongs to the HAK/KUP transporter (TC 2.A.72) family.

It localises to the cell inner membrane. It catalyses the reaction K(+)(in) + H(+)(in) = K(+)(out) + H(+)(out). Responsible for the low-affinity transport of potassium into the cell. Likely operates as a K(+):H(+) symporter. This Yersinia pestis (strain Pestoides F) protein is Low affinity potassium transport system protein Kup.